A 42-amino-acid chain; its full sequence is Photosystem I reaction center subunit IX (42 aa).

The chain crosses the membrane as a helical span at residues 8 to 28; the sequence is YLSTAPVLFTVWLSFTASFII.

Belongs to the PsaJ family.

The protein localises to the plastid. The protein resides in the chloroplast thylakoid membrane. Functionally, may help in the organization of the PsaE and PsaF subunits. In Rhodomonas salina (Cryptomonas salina), this protein is Photosystem I reaction center subunit IX.